An 828-amino-acid chain; its full sequence is DNA topoisomerase 3 (828 aa).

In terms of domain architecture, Toprim spans 4–149 (RILNVAEKPS…KFEFYRAHFS (146 aa)). A Topo IA-type catalytic domain is found at 167-617 (NEKDSIAVDT…STIEKYKQLY (451 aa)). Catalysis depends on tyrosine 361, which acts as the O-(5'-phospho-DNA)-tyrosine intermediate. The interval 763–828 (QQQQQQQQQQ…SDRNNNNFIF (66 aa)) is disordered.

The protein belongs to the type IA topoisomerase family.

The catalysed reaction is ATP-independent breakage of single-stranded DNA, followed by passage and rejoining.. In terms of biological role, releases the supercoiling and torsional tension of DNA introduced during the DNA replication and transcription by transiently cleaving and rejoining one strand of the DNA duplex. Introduces a single-strand break via transesterification at a target site in duplex DNA. The scissile phosphodiester is attacked by the catalytic tyrosine of the enzyme, resulting in the formation of a DNA-(5'-phosphotyrosyl)-enzyme intermediate and the expulsion of a 3'-OH DNA strand. The free DNA strand than undergoes passage around the unbroken strand thus removing DNA supercoils. Finally, in the religation step, the DNA 3'-OH attacks the covalent intermediate to expel the active-site tyrosine and restore the DNA phosphodiester backbone. In Dictyostelium discoideum (Social amoeba), this protein is DNA topoisomerase 3 (top3).